We begin with the raw amino-acid sequence, 271 residues long: Insulin-like growth factor-binding protein 5 (271 aa).

Positions 1 to 19 (MVISVVLLLLAAYAVPAQG) are cleaved as a signal peptide. An IGFBP N-terminal domain is found at 22-102 (SFVHCEPCDE…LHGRGVCLNE (81 aa)). 6 cysteine pairs are disulfide-bonded: Cys26-Cys52, Cys29-Cys54, Cys37-Cys55, Cys44-Cys58, Cys66-Cys79, and Cys73-Cys99. A compositionally biased stretch (basic and acidic residues) spans 109 to 121 (TKIERDSREHEEP). The segment at 109 to 129 (TKIERDSREHEEPTTSEMAEE) is disordered. A Phosphoserine modification is found at Ser115. The Thyroglobulin type-1 domain occupies 188–262 (QGPCRRHMEA…MEYVDGDFQC (75 aa)). Cystine bridges form between Cys191–Cys218, Cys229–Cys240, and Cys242–Cys262.

As to quaternary structure, interacts with IGF1; this interaction enhances the growth stimulatory effects of IGF1 on fibroblasts. Interacts with CAV1; this interaction allows trafficking of IGFBP5 from the plasma membrane to the nucleus. Interacts with NCL; this interaction is necessary for IGFBP5 localization to the nucleus. In terms of tissue distribution, most abundant in kidney, uterus and gastrocnemius muscle.

Its subcellular location is the secreted. It is found in the cytoplasm. It localises to the nucleus. In terms of biological role, multifunctional protein that plays a critical role in regulating the availability of IGFs to their receptors and thereby regulates IGF-mediated cellular processes including proliferation, differentiation, and apoptosis in a cell-type specific manner. Increases the cell proliferation of osteoblasts, intestinal smooth muscle cells and neuroblastoma cells. Enhances adhesion and survival of epithelial cells but decreases adhesion of mesenchymal cells. Once secreted, acts as a major mediator of mTORC1-dependent feedback inhibition of IGF1 signaling. Also plays a role in the induction of extracellular matrix (ECM) production and deposition independently of its nuclear translocation and binding to IGFs. Acts itself as a growth factor that can act independently of IGFs to regulate bone formation. Acts as a ligand for the ROR1 receptor which triggers formation of ROR1/HER2 heterodimer to enhance CREB oncogenic signaling. The sequence is that of Insulin-like growth factor-binding protein 5 (Igfbp5) from Mus musculus (Mouse).